The primary structure comprises 220 residues: Putative glutathione S-transferase C460.02c (220 aa).

The GST N-terminal domain maps to 1 to 81 (MFLGTIYSFK…YFYEKGKHND (81 aa)). One can recognise a GST C-terminal domain in the interval 89–216 (NEIEEAEMLK…YPLELPLTVT (128 aa)).

Belongs to the GST superfamily.

Its subcellular location is the cytoplasm. The catalysed reaction is RX + glutathione = an S-substituted glutathione + a halide anion + H(+). Involved in the oxidative stress response and detoxification. The chain is Putative glutathione S-transferase C460.02c from Schizosaccharomyces pombe (strain 972 / ATCC 24843) (Fission yeast).